The following is a 344-amino-acid chain: Ribosomal RNA large subunit methyltransferase Cfr (344 aa).

E90 serves as the catalytic Proton acceptor. Residues 97 to 330 enclose the Radical SAM core domain; sequence KQGWESFCIS…ATVRTQFGSE (234 aa). A disulfide bridge connects residues C104 and C335. Residues C111, C115, and C118 each coordinate [4Fe-4S] cluster. S-adenosyl-L-methionine contacts are provided by residues 157–158, S188, 211–213, and N292; these read GE and SLH. Residue C335 is the S-methylcysteine intermediate of the active site.

Belongs to the radical SAM superfamily. RlmN family. Cfr subfamily. [4Fe-4S] cluster serves as cofactor.

The protein localises to the cytoplasm. It catalyses the reaction adenosine(2503) in 23S rRNA + 2 reduced [2Fe-2S]-[ferredoxin] + 2 S-adenosyl-L-methionine = 8-methyladenosine(2503) in 23S rRNA + 5'-deoxyadenosine + L-methionine + 2 oxidized [2Fe-2S]-[ferredoxin] + S-adenosyl-L-homocysteine. Specifically methylates position 8 of adenine 2503 in 23S rRNA. Confers resistance to some classes of antibiotics. This Clostridium botulinum (strain Okra / Type B1) protein is Ribosomal RNA large subunit methyltransferase Cfr.